Reading from the N-terminus, the 542-residue chain is Chaperonin GroEL (542 aa).

Residues 29–32, Lys-50, 86–90, Gly-414, 477–479, and Asp-493 contribute to the ATP site; these read TMGP, DGTTT, and NAA.

It belongs to the chaperonin (HSP60) family. As to quaternary structure, forms a cylinder of 14 subunits composed of two heptameric rings stacked back-to-back. Interacts with the co-chaperonin GroES.

The protein resides in the cytoplasm. The catalysed reaction is ATP + H2O + a folded polypeptide = ADP + phosphate + an unfolded polypeptide.. Together with its co-chaperonin GroES, plays an essential role in assisting protein folding. The GroEL-GroES system forms a nano-cage that allows encapsulation of the non-native substrate proteins and provides a physical environment optimized to promote and accelerate protein folding. The protein is Chaperonin GroEL of Sulfurimonas denitrificans (strain ATCC 33889 / DSM 1251) (Thiomicrospira denitrificans (strain ATCC 33889 / DSM 1251)).